A 180-amino-acid polypeptide reads, in one-letter code: Ribulose bisphosphate carboxylase small subunit, chloroplastic 2 (180 aa).

The N-terminal 54 residues, 1–54, are a transit peptide targeting the chloroplast; that stretch reads MASMMSNAAVVGRTTPAQASMVAPFTGLKSVSAFPVTKKSNDITSIASNGGRVQ.

It belongs to the RuBisCO small chain family. In terms of assembly, heterohexadecamer of 8 large and 8 small subunits.

The protein resides in the plastid. It localises to the chloroplast. RuBisCO catalyzes two reactions: the carboxylation of D-ribulose 1,5-bisphosphate, the primary event in carbon dioxide fixation, as well as the oxidative fragmentation of the pentose substrate. Both reactions occur simultaneously and in competition at the same active site. Although the small subunit is not catalytic it is essential for maximal activity. The protein is Ribulose bisphosphate carboxylase small subunit, chloroplastic 2 of Mesembryanthemum crystallinum (Common ice plant).